Reading from the N-terminus, the 475-residue chain is Tubulin gamma chain (475 aa).

142–148 (AGGTGSG) is a binding site for GTP. Residues 455-475 (GKQVSGEGNTSGTVDSRVGAS) are disordered.

Belongs to the tubulin family.

It is found in the cytoplasm. The protein localises to the cytoskeleton. It localises to the microtubule organizing center. Its function is as follows. Tubulin is the major constituent of microtubules. The gamma chain is found at microtubule organizing centers (MTOC) such as the spindle poles, suggesting that it is involved in the minus-end nucleation of microtubule assembly. This chain is Tubulin gamma chain (TUBG1), found in Physcomitrium patens (Spreading-leaved earth moss).